The following is a 117-amino-acid chain: Small ribosomal subunit protein bS6m (117 aa).

It belongs to the bacterial ribosomal protein bS6 family. Component of the mitochondrial small ribosomal subunit (mt-SSU). Mature N.crassa 74S mitochondrial ribosomes consist of a small (37S) and a large (54S) subunit. The 37S small subunit contains a 16S ribosomal RNA (16S mt-rRNA) and 32 different proteins. The 54S large subunit contains a 23S rRNA (23S mt-rRNA) and 42 different proteins.

It localises to the mitochondrion. Component of the mitochondrial ribosome (mitoribosome), a dedicated translation machinery responsible for the synthesis of mitochondrial genome-encoded proteins, including at least some of the essential transmembrane subunits of the mitochondrial respiratory chain. The mitoribosomes are attached to the mitochondrial inner membrane and translation products are cotranslationally integrated into the membrane. This is Small ribosomal subunit protein bS6m (mrp17) from Neurospora crassa (strain ATCC 24698 / 74-OR23-1A / CBS 708.71 / DSM 1257 / FGSC 987).